The following is a 565-amino-acid chain: Heme/hemopexin transporter protein HuxB (565 aa).

Residues methionine 1 to alanine 26 form the signal peptide. Residues phenylalanine 73–glycine 150 enclose the POTRA domain.

This sequence belongs to the TPS (TC 1.B.20) family.

Its subcellular location is the cell outer membrane. Its function is as follows. Likely functions in the release of soluble HxuA from the cell. Functionally, probable member of a two partner secretion pathway (TPS) in which it mediates the secretion of HuxA. This is Heme/hemopexin transporter protein HuxB (hxuB) from Haemophilus influenzae (strain 86-028NP).